A 365-amino-acid polypeptide reads, in one-letter code: Fucose-specific lectin (365 aa).

A signal peptide spans 1–21 (MKLLHFTILLQVSLFPASSLA). Repeat copies occupy residues 22 to 79 (QAGG…NDTI), 80 to 141 (AKAR…NQYN), 142 to 206 (FQVA…RLAN), 207 to 261 (FGPA…VRTA), 262 to 309 (KPRT…DGAF), and 310 to 365 (EHSA…IPPA). Residues 22 to 365 (QAGGNNTEVQ…RRGILAIPPA (344 aa)) form a 6 X approximate tandem repeats region. N-linked (GlcNAc...) asparagine glycosylation is present at Asn26. The beta-L-fucose site is built by Arg51, Glu63, and Trp70. Asn76 and Asn85 each carry an N-linked (GlcNAc...) asparagine glycan. Arg111 contacts beta-L-fucose. Asn118 carries an N-linked (GlcNAc...) asparagine glycan. 6 residues coordinate beta-L-fucose: Glu123, Trp132, Arg164, Glu176, Trp201, and Arg231. Asn248 carries an N-linked (GlcNAc...) asparagine glycan. Residues Arg283, Arg333, and Glu347 each coordinate beta-L-fucose.

It belongs to the fungal fucose-specific lectin family. In terms of assembly, homodimer.

It is found in the secreted. Probable L-fucose-binding lectin. The protein is Fucose-specific lectin of Arthroderma benhamiae (strain ATCC MYA-4681 / CBS 112371) (Trichophyton mentagrophytes).